Reading from the N-terminus, the 206-residue chain is Methyl-coenzyme M reductase operon protein C (206 aa).

In terms of assembly, MCR is composed of three subunits: alpha, beta, and gamma. The function of proteins C and D is not known.

In Methanosarcina barkeri (strain Fusaro / DSM 804), this protein is Methyl-coenzyme M reductase operon protein C (mcrC).